The primary structure comprises 212 residues: Cytochrome c biogenesis ATP-binding export protein CcmA (212 aa).

An ABC transporter domain is found at 7–209 (LSLQNLSCQR…HLQKLNLAAY (203 aa)). Residue 39–46 (GHNGIGKT) participates in ATP binding.

Belongs to the ABC transporter superfamily. CcmA exporter (TC 3.A.1.107) family. The complex is composed of two ATP-binding proteins (CcmA) and two transmembrane proteins (CcmB).

It is found in the cell inner membrane. The enzyme catalyses heme b(in) + ATP + H2O = heme b(out) + ADP + phosphate + H(+). Part of the ABC transporter complex CcmAB involved in the biogenesis of c-type cytochromes; once thought to export heme, this seems not to be the case, but its exact role is uncertain. Responsible for energy coupling to the transport system. This Haemophilus influenzae (strain ATCC 51907 / DSM 11121 / KW20 / Rd) protein is Cytochrome c biogenesis ATP-binding export protein CcmA.